The chain runs to 178 residues: uncharacterized protein (178 aa).

Residues Leu-7–Glu-27 form a helical membrane-spanning segment.

Its subcellular location is the membrane. This is an uncharacterized protein from Methanocaldococcus jannaschii (strain ATCC 43067 / DSM 2661 / JAL-1 / JCM 10045 / NBRC 100440) (Methanococcus jannaschii).